Reading from the N-terminus, the 35-residue chain is Tau/kappa-theraphotoxin-Pc1a (35 aa).

Disulfide bonds link Cys-3/Cys-17, Cys-10/Cys-22, and Cys-16/Cys-29. Phe-35 is modified (phenylalanine amide).

This sequence belongs to the neurotoxin 10 (Hwtx-1) family. 62 (Vatx) subfamily. Expressed by the venom gland.

It localises to the secreted. Functionally, selectively activates mammalian TRPV1, the capsaicin receptor, a non-selective cation channel expressed by sensory neurons of the pain pathway. Is less potent than VaTx2 and VaTx3. Interacts with distinct regions of the channel than capsaicin, since it only acts on the extracellular face of the channel, and capsaicin binds to the cytosolic side. Also activates avian TRPV1, which is insensitive to capsaicin. Significantly inhibits potassium channels Kv2.1/KCNB1. The polypeptide is Tau/kappa-theraphotoxin-Pc1a (Psalmopoeus cambridgei (Trinidad chevron tarantula)).